The primary structure comprises 362 residues: 2-aminoethylphosphonate--pyruvate transaminase (362 aa).

Lysine 193 is subject to N6-(pyridoxal phosphate)lysine.

The protein belongs to the class-V pyridoxal-phosphate-dependent aminotransferase family. PhnW subfamily. In terms of assembly, homodimer. The cofactor is pyridoxal 5'-phosphate.

It catalyses the reaction (2-aminoethyl)phosphonate + pyruvate = phosphonoacetaldehyde + L-alanine. Involved in phosphonate degradation. This is 2-aminoethylphosphonate--pyruvate transaminase from Bacteroides fragilis (strain ATCC 25285 / DSM 2151 / CCUG 4856 / JCM 11019 / LMG 10263 / NCTC 9343 / Onslow / VPI 2553 / EN-2).